A 375-amino-acid polypeptide reads, in one-letter code: Alcohol dehydrogenase class-3 chain L (375 aa).

Position 1 is an N-acetylalanine (A1). Residues C46, H68, C98, C101, C104, C112, and C175 each coordinate Zn(2+).

The protein belongs to the zinc-containing alcohol dehydrogenase family. Class-III subfamily. As to quaternary structure, homodimer or heterodimer with H chain. Zn(2+) serves as cofactor.

Its subcellular location is the cytoplasm. The catalysed reaction is a primary alcohol + NAD(+) = an aldehyde + NADH + H(+). It catalyses the reaction a secondary alcohol + NAD(+) = a ketone + NADH + H(+). The enzyme catalyses S-(hydroxymethyl)glutathione + NADP(+) = S-formylglutathione + NADPH + H(+). It carries out the reaction S-(hydroxymethyl)glutathione + NAD(+) = S-formylglutathione + NADH + H(+). Functionally, class-III ADH is remarkably ineffective in oxidizing ethanol, but it readily catalyzes the oxidation of long-chain primary alcohols and the oxidation of S-(hydroxymethyl) glutathione. This chain is Alcohol dehydrogenase class-3 chain L, found in Gadus morhua (Atlantic cod).